The primary structure comprises 219 residues: Holliday junction branch migration complex subunit RuvA (219 aa).

The interval 1-67 (MIGWLRGERI…DDGSSLFGFP (67 aa)) is domain I. The interval 68 to 146 (DRRERDLFRV…AWSAEKNSDH (79 aa)) is domain II. A flexible linker region spans residues 147 to 161 (SDLSLVDRSDLKSLP). A domain III region spans residues 162 to 219 (IEPDPLQDLQLTLSTLGYEDLEIRRAMRAVATGEEVPAANDGDGWLRASLRWLNRPSA).

It belongs to the RuvA family. In terms of assembly, homotetramer. Forms an RuvA(8)-RuvB(12)-Holliday junction (HJ) complex. HJ DNA is sandwiched between 2 RuvA tetramers; dsDNA enters through RuvA and exits via RuvB. An RuvB hexamer assembles on each DNA strand where it exits the tetramer. Each RuvB hexamer is contacted by two RuvA subunits (via domain III) on 2 adjacent RuvB subunits; this complex drives branch migration. In the full resolvosome a probable DNA-RuvA(4)-RuvB(12)-RuvC(2) complex forms which resolves the HJ.

It localises to the cytoplasm. In terms of biological role, the RuvA-RuvB-RuvC complex processes Holliday junction (HJ) DNA during genetic recombination and DNA repair, while the RuvA-RuvB complex plays an important role in the rescue of blocked DNA replication forks via replication fork reversal (RFR). RuvA specifically binds to HJ cruciform DNA, conferring on it an open structure. The RuvB hexamer acts as an ATP-dependent pump, pulling dsDNA into and through the RuvAB complex. HJ branch migration allows RuvC to scan DNA until it finds its consensus sequence, where it cleaves and resolves the cruciform DNA. The chain is Holliday junction branch migration complex subunit RuvA from Synechococcus sp. (strain CC9311).